A 740-amino-acid polypeptide reads, in one-letter code: Folic acid synthesis protein fol1 (740 aa).

DHNA regions lie at residues 39–160 (DLIH…REID) and 161–280 (DQFF…SCFS). The segment at 291–449 (IDNEAVYISL…EKIVDHDIKP (159 aa)) is HPPK. Residues 471 to 730 (TYIMAILNLT…DVYEMYKISK (260 aa)) enclose the Pterin-binding domain. Residues 473–740 (IMAILNLTPD…MSDAIWKEIY (268 aa)) form a DHPS region. Asparagine 478 serves as a coordination point for Mg(2+). (7,8-dihydropterin-6-yl)methyl diphosphate-binding positions include threonine 517, aspartate 552, asparagine 571, aspartate 643, lysine 683, and 718–720 (RVH).

It in the N-terminal section; belongs to the DHNA family. The protein in the central section; belongs to the HPPK family. In the C-terminal section; belongs to the DHPS family. It depends on Mg(2+) as a cofactor.

The enzyme catalyses 7,8-dihydroneopterin = 6-hydroxymethyl-7,8-dihydropterin + glycolaldehyde. It catalyses the reaction 6-hydroxymethyl-7,8-dihydropterin + ATP = (7,8-dihydropterin-6-yl)methyl diphosphate + AMP + H(+). The catalysed reaction is (7,8-dihydropterin-6-yl)methyl diphosphate + 4-aminobenzoate = 7,8-dihydropteroate + diphosphate. It functions in the pathway cofactor biosynthesis; tetrahydrofolate biosynthesis; 2-amino-4-hydroxy-6-hydroxymethyl-7,8-dihydropteridine diphosphate from 7,8-dihydroneopterin triphosphate: step 3/4. Its pathway is cofactor biosynthesis; tetrahydrofolate biosynthesis; 2-amino-4-hydroxy-6-hydroxymethyl-7,8-dihydropteridine diphosphate from 7,8-dihydroneopterin triphosphate: step 4/4. The protein operates within cofactor biosynthesis; tetrahydrofolate biosynthesis; 7,8-dihydrofolate from 2-amino-4-hydroxy-6-hydroxymethyl-7,8-dihydropteridine diphosphate and 4-aminobenzoate: step 1/2. Catalyzes three sequential steps of tetrahydrofolate biosynthesis. This Pneumocystis carinii protein is Folic acid synthesis protein fol1 (fol1).